We begin with the raw amino-acid sequence, 352 residues long: Eukaryotic translation initiation factor 3 subunit H (352 aa).

The interval 1-34 (MASRKEGTGSTATSSSSTGGAVGKGKGKGGSGDS) is disordered. The residue at position 3 (Ser-3) is a Phosphoserine. Residues 8–19 (TGSTATSSSSTG) show a composition bias toward low complexity. Residues 20 to 32 (GAVGKGKGKGGSG) are compositionally biased toward gly residues. The MPN domain occupies 39–173 (VQIDGLVVLK…LKAYRLTPKL (135 aa)). Phosphoserine is present on Ser-183. The interval 265-300 (RNSSKQQQQKHQYQQRRQQENMQRQSRGEPPLPEED) is disordered. Positions 270–289 (QQQQKHQYQQRRQQENMQRQ) are enriched in low complexity. Lys-303 participates in a covalent cross-link: Glycyl lysine isopeptide (Lys-Gly) (interchain with G-Cter in SUMO2).

This sequence belongs to the eIF-3 subunit H family. In terms of assembly, component of the eukaryotic translation initiation factor 3 (eIF-3) complex, which is composed of 13 subunits: EIF3A, EIF3B, EIF3C, EIF3D, EIF3E, EIF3F, EIF3G, EIF3H, EIF3I, EIF3J, EIF3K, EIF3L and EIF3M. The eIF-3 complex appears to include 3 stable modules: module A is composed of EIF3A, EIF3B, EIF3G and EIF3I; module B is composed of EIF3F, EIF3H, and EIF3M; and module C is composed of EIF3C, EIF3D, EIF3E, EIF3K and EIF3L. EIF3C of module C binds EIF3B of module A and EIF3H of module B, thereby linking the three modules. EIF3J is a labile subunit that binds to the eIF-3 complex via EIF3B. The eIF-3 complex interacts with RPS6KB1 under conditions of nutrient depletion. Mitogenic stimulation leads to binding and activation of a complex composed of MTOR and RPTOR, leading to phosphorylation and release of RPS6KB1 and binding of EIF4B to eIF-3. Interacts with RNF139; the interaction leads to protein translation inhibitions in a ubiquitination-dependent manner. Interacts with DHX33; the interaction is independent of RNA.

The protein resides in the cytoplasm. Component of the eukaryotic translation initiation factor 3 (eIF-3) complex, which is required for several steps in the initiation of protein synthesis. The eIF-3 complex associates with the 40S ribosome and facilitates the recruitment of eIF-1, eIF-1A, eIF-2:GTP:methionyl-tRNAi and eIF-5 to form the 43S pre-initiation complex (43S PIC). The eIF-3 complex stimulates mRNA recruitment to the 43S PIC and scanning of the mRNA for AUG recognition. The eIF-3 complex is also required for disassembly and recycling of post-termination ribosomal complexes and subsequently prevents premature joining of the 40S and 60S ribosomal subunits prior to initiation. The eIF-3 complex specifically targets and initiates translation of a subset of mRNAs involved in cell proliferation, including cell cycling, differentiation and apoptosis, and uses different modes of RNA stem-loop binding to exert either translational activation or repression. In Rattus norvegicus (Rat), this protein is Eukaryotic translation initiation factor 3 subunit H (Eif3h).